The sequence spans 447 residues: uncharacterized protein (447 aa).

3 helical membrane-spanning segments follow: residues 28-48, 241-261, and 397-417; these read IVIVSATYSISLDSTVLYPAV, IDASFTSIFYSVFMLSIYYAI, and PFVLNVITVADGPCSFSLSIF.

The protein resides in the membrane. This is an uncharacterized protein from Schizosaccharomyces pombe (strain 972 / ATCC 24843) (Fission yeast).